The chain runs to 335 residues: 1D-myo-inositol 2-acetamido-2-deoxy-alpha-D-glucopyranoside deacetylase (335 aa).

Zn(2+) is bound by residues His-19, Asp-22, and His-158.

The protein belongs to the MshB deacetylase family. It depends on Zn(2+) as a cofactor.

It carries out the reaction 1D-myo-inositol 2-acetamido-2-deoxy-alpha-D-glucopyranoside + H2O = 1D-myo-inositol 2-amino-2-deoxy-alpha-D-glucopyranoside + acetate. In terms of biological role, catalyzes the deacetylation of 1D-myo-inositol 2-acetamido-2-deoxy-alpha-D-glucopyranoside (GlcNAc-Ins) in the mycothiol biosynthesis pathway. The sequence is that of 1D-myo-inositol 2-acetamido-2-deoxy-alpha-D-glucopyranoside deacetylase from Corynebacterium urealyticum (strain ATCC 43042 / DSM 7109).